Reading from the N-terminus, the 238-residue chain is DNA damage-regulated autophagy modulator protein 1 (238 aa).

Transmembrane regions (helical) follow at residues 9 to 29 (AFVP…SYVV), 53 to 73 (SGIF…TMYT), 91 to 111 (VFNL…GIVA), 116 to 136 (LAVP…GVVY), 161 to 181 (MAIS…ASLI), and 200 to 220 (VSAI…LTFI).

It belongs to the DRAM/TMEM150 family.

The protein localises to the lysosome membrane. In terms of biological role, lysosomal modulator of autophagy that plays a central role in p53/TP53-mediated apoptosis. Not involved in p73/TP73-mediated autophagy. The sequence is that of DNA damage-regulated autophagy modulator protein 1 (Dram1) from Mus musculus (Mouse).